A 488-amino-acid polypeptide reads, in one-letter code: GTPase Der (488 aa).

2 EngA-type G domains span residues 3-166 (PVVA…AEAM) and 199-372 (IKLA…DSAT). GTP-binding positions include 9–16 (GRPNVGKS), 56–60 (DTGGI), 118–121 (NKID), 205–212 (GKPNVGKS), 252–256 (DTAGV), and 317–320 (NKWD). The KH-like domain occupies 373–457 (RRVSTSMLTR…PIQLRFQEGD (85 aa)).

The protein belongs to the TRAFAC class TrmE-Era-EngA-EngB-Septin-like GTPase superfamily. EngA (Der) GTPase family. As to quaternary structure, associates with the 50S ribosomal subunit.

Functionally, GTPase that plays an essential role in the late steps of ribosome biogenesis. This is GTPase Der from Shewanella sp. (strain ANA-3).